We begin with the raw amino-acid sequence, 116 residues long: Toxin ICK-10 (116 aa).

An N-terminal signal peptide occupies residues 1-19 (MMKLYSLVIIATLAAAAFA). 4 cysteine pairs are disulfide-bonded: cysteine 56–cysteine 71, cysteine 64–cysteine 77, cysteine 68–cysteine 113, and cysteine 70–cysteine 84.

The protein belongs to the neurotoxin 25 family. ICK-8 subfamily. In terms of tissue distribution, expressed by the venom gland.

It localises to the secreted. Functionally, ion channel inhibitor. The sequence is that of Toxin ICK-10 from Trittame loki (Brush-footed trapdoor spider).